Reading from the N-terminus, the 468-residue chain is Adenosylhomocysteinase (468 aa).

Residues Thr63, Asp139, and Glu164 each contribute to the substrate site. 165 to 167 (TTT) is a binding site for NAD(+). Positions 194 and 198 each coordinate substrate. NAD(+)-binding positions include Asn199, 228 to 233 (GYGDVG), Glu251, Asn300, 321 to 323 (IGH), and Asn374.

It belongs to the adenosylhomocysteinase family. NAD(+) serves as cofactor.

The protein resides in the cytoplasm. The catalysed reaction is S-adenosyl-L-homocysteine + H2O = L-homocysteine + adenosine. Its pathway is amino-acid biosynthesis; L-homocysteine biosynthesis; L-homocysteine from S-adenosyl-L-homocysteine: step 1/1. Functionally, may play a key role in the regulation of the intracellular concentration of adenosylhomocysteine. The chain is Adenosylhomocysteinase from Stutzerimonas stutzeri (strain A1501) (Pseudomonas stutzeri).